We begin with the raw amino-acid sequence, 805 residues long: Acetyl-CoA decarbonylase/synthase complex subunit alpha 2 (805 aa).

Residues Cys72, Cys75, Cys76, Cys78, Cys83, and Cys93 each coordinate [4Fe-4S] cluster. His116 contacts CO. His249, Cys277, and Cys322 together coordinate [Ni-4Fe-4S] cluster. 2 4Fe-4S ferredoxin-type domains span residues Glu407–Ala435 and Glu445–Leu474. The [4Fe-4S] cluster site is built by Cys416, Cys419, Cys422, Cys426, Cys454, Cys457, Cys460, and Cys464. 3 residues coordinate [Ni-4Fe-4S] cluster: Cys522, Cys551, and Cys586.

It belongs to the Ni-containing carbon monoxide dehydrogenase family. As to quaternary structure, heterotetramer of two alpha and two epsilon subunits. The ACDS complex is made up of alpha, epsilon, beta, gamma and delta subunits with a probable stoichiometry of (alpha(2)epsilon(2))(4)-beta(8)-(gamma(1)delta(1))(8). The cofactor is [4Fe-4S] cluster. It depends on [Ni-4Fe-4S] cluster as a cofactor.

It carries out the reaction CO + 2 oxidized [2Fe-2S]-[ferredoxin] + H2O = 2 reduced [2Fe-2S]-[ferredoxin] + CO2 + 2 H(+). It functions in the pathway one-carbon metabolism; methanogenesis from acetate. In terms of biological role, part of the ACDS complex that catalyzes the reversible cleavage of acetyl-CoA, allowing growth on acetate as sole source of carbon and energy. The alpha-epsilon subcomponent functions as a carbon monoxide dehydrogenase. This chain is Acetyl-CoA decarbonylase/synthase complex subunit alpha 2, found in Methanosarcina acetivorans (strain ATCC 35395 / DSM 2834 / JCM 12185 / C2A).